The sequence spans 64 residues: Large ribosomal subunit protein bL35 (64 aa).

Disordered stretches follow at residues 1–22 and 34–64; these read MPKA…TGKI and EHKP…LLNG. The span at 34-48 shows a compositional bias: basic and acidic residues; that stretch reads EHKPSTRTRRLDGHT. Polar residues predominate over residues 50 to 64; the sequence is VSANDTQRVNSLLNG.

Belongs to the bacterial ribosomal protein bL35 family.

The chain is Large ribosomal subunit protein bL35 from Mycobacterium leprae (strain Br4923).